A 99-amino-acid polypeptide reads, in one-letter code: Aspartyl/glutamyl-tRNA(Asn/Gln) amidotransferase subunit C (99 aa).

Belongs to the GatC family. As to quaternary structure, heterotrimer of A, B and C subunits.

It catalyses the reaction L-glutamyl-tRNA(Gln) + L-glutamine + ATP + H2O = L-glutaminyl-tRNA(Gln) + L-glutamate + ADP + phosphate + H(+). It carries out the reaction L-aspartyl-tRNA(Asn) + L-glutamine + ATP + H2O = L-asparaginyl-tRNA(Asn) + L-glutamate + ADP + phosphate + 2 H(+). Its function is as follows. Allows the formation of correctly charged Asn-tRNA(Asn) or Gln-tRNA(Gln) through the transamidation of misacylated Asp-tRNA(Asn) or Glu-tRNA(Gln) in organisms which lack either or both of asparaginyl-tRNA or glutaminyl-tRNA synthetases. The reaction takes place in the presence of glutamine and ATP through an activated phospho-Asp-tRNA(Asn) or phospho-Glu-tRNA(Gln). The protein is Aspartyl/glutamyl-tRNA(Asn/Gln) amidotransferase subunit C of Burkholderia cenocepacia (strain ATCC BAA-245 / DSM 16553 / LMG 16656 / NCTC 13227 / J2315 / CF5610) (Burkholderia cepacia (strain J2315)).